We begin with the raw amino-acid sequence, 500 residues long: MVLSKTASKSDDSIHSTFASRYVRNSISRFEIPKNSIPKEAAYQIINDELKFDGNPRLNLASFVTTWMEPECDKLMMESINKNNVEMDQYPVTTDLQNRCVNMIARLFNAPLGDGEAAIGVGTVGSSEAVMLAGLAFKRQWQNKRKALGLPYDRPNIVTGANIQVCLEKFARYFEVELKEVKLREGYYVMDPDKAVEMVDENTICVVAILGSTLTGEFEDVKLLNDLLVEKNKKTGWDTPIHVDAASGGFIAPFLYPDLEWDFRLPLVKSINVSGHKYGLVYAGIGWVVWRTKTDLPDELIFHINYLGADQPTFTLNFSKGSSQVIAQYYQLIRLGFEGYRNVMDNCRENMMVLRQGLEKTGRFNIVSKENGVPLVAFSLKDSSRHNEFEVAEMLRRFGWIVPAYTMPADAQHVTVLRVVIREDFSRTLAERLVADFEKVLHELDTLPARVHAKMASGKVNGVKKTPEETQREVTAYWKKFVDTKTDKNGVPLVASITNQ.

S8 carries the phosphoserine modification. An N6-(pyridoxal phosphate)lysine modification is found at K277.

Belongs to the group II decarboxylase family. Homohexamer. Interacts with calmodulin. Pyridoxal 5'-phosphate is required as a cofactor. In terms of tissue distribution, expressed at low levels in siliques.

It catalyses the reaction L-glutamate + H(+) = 4-aminobutanoate + CO2. In terms of biological role, catalyzes the production of GABA. The calmodulin-binding is calcium-dependent and it is proposed that this may, directly or indirectly, form a calcium regulated control of GABA biosynthesis. This Arabidopsis thaliana (Mouse-ear cress) protein is Glutamate decarboxylase 3 (GAD3).